The following is a 317-amino-acid chain: Spermidine synthase 2 (317 aa).

Positions 27 to 264 (PGWFSEISPL…GMIGFMLCST (238 aa)) constitute a PABS domain. Glutamine 58 lines the S-adenosyl 3-(methylsulfanyl)propylamine pocket. Tyrosine 88 lines the putrescine pocket. S-adenosyl 3-(methylsulfanyl)propylamine is bound by residues glutamine 89, aspartate 113, glutamate 133, 164–165 (DG), and aspartate 183. Aspartate 183 serves as the catalytic Proton acceptor. Putrescine is bound by residues 183–186 (DSSD) and tyrosine 252.

This sequence belongs to the spermidine/spermine synthase family.

It carries out the reaction S-adenosyl 3-(methylsulfanyl)propylamine + putrescine = S-methyl-5'-thioadenosine + spermidine + H(+). It participates in amine and polyamine biosynthesis; spermidine biosynthesis; spermidine from putrescine: step 1/1. The protein is Spermidine synthase 2 of Datura stramonium (Jimsonweed).